The following is a 347-amino-acid chain: Mediator of RNA polymerase II transcription subunit 7 (347 aa).

Disordered stretches follow at residues glycine 97–histidine 172 and valine 302–glutamate 326. Composition is skewed to low complexity over residues serine 108–threonine 171 and valine 302–valine 312.

The protein belongs to the Mediator complex subunit 7 family. In terms of assembly, component of the Mediator complex.

The protein resides in the nucleus. In terms of biological role, component of the Mediator complex, a coactivator involved in the regulated transcription of nearly all RNA polymerase II-dependent genes. Mediator functions as a bridge to convey information from gene-specific regulatory proteins to the basal RNA polymerase II transcription machinery. Mediator is recruited to promoters by direct interactions with regulatory proteins and serves as a scaffold for the assembly of a functional preinitiation complex with RNA polymerase II and the general transcription factors. The chain is Mediator of RNA polymerase II transcription subunit 7 (med-7) from Neurospora crassa (strain ATCC 24698 / 74-OR23-1A / CBS 708.71 / DSM 1257 / FGSC 987).